Here is a 3414-residue protein sequence, read N- to C-terminus: Genome polyprotein (3414 aa).

Positions 1–27 are disordered; it reads MAGKAILKGKGGGPPRRVSKETAKKTR. Over 1–98 the chain is Cytoplasmic; it reads MAGKAILKGK…LQKRGKRRST (98 aa). Positions 98-116 are cleaved as a propeptide — ER anchor for the capsid protein C, removed in mature form by serine protease NS3; it reads TTDWTGWLLVAMLLSIALA. The helical transmembrane segment at 99–119 threads the bilayer; that stretch reads TDWTGWLLVAMLLSIALAATV. Residues 120 to 242 lie on the Extracellular side of the membrane; sequence RKEGDGTTVI…HLTRVEGWVW (123 aa). N-linked (GlcNAc...) asparagine; by host glycosylation occurs at N144. Residues 243-260 form a helical membrane-spanning segment; the sequence is KNKSLTLAVVVIVWMTVE. S261 is a topological domain (cytoplasmic). The chain crosses the membrane as a helical span at residues 262–280; that stretch reads AVTRIVIVSALLCLAPAYA. At 281 to 727 the chain is on the extracellular side; the sequence is SRCTHLENRD…HTVLGGAFNS (447 aa). Disulfide bonds link C283–C310, C340–C396, C340–C401, C354–C385, C372–C396, and C372–C401. Positions 378–391 are fusion peptide; sequence DRGWGNHCGLFGKG. The N-linked (GlcNAc...) asparagine; by host glycan is linked to N434. Cystine bridges form between C466-C570 and C587-C618. A helical membrane pass occupies residues 728–748; sequence VFGGVGFLPRILLGISLAWLG. Residues 749-755 are Cytoplasmic-facing; it reads LNMRNPT. A helical transmembrane segment spans residues 756–776; that stretch reads MSMSFLLAGGLVLTMTLGVGA. Residues 777–1132 lie on the Extracellular side of the membrane; the sequence is DVGCAVDTER…RSMVVADNGE (356 aa). Intrachain disulfides connect C780–C791, C831–C920, C955–C1000, C1057–C1106, C1068–C1090, and C1089–C1093. 3 N-linked (GlcNAc...) asparagine; by host glycosylation sites follow: N861, N983, and N999. The chain crosses the membrane as a helical span at residues 1133–1153; that stretch reads LLSEGGIPGIVAVFVVLEYII. Residues 1154–1158 are Cytoplasmic-facing; that stretch reads RKRPS. A helical transmembrane segment spans residues 1159–1179; the sequence is AGLTVVWGGVVVLALLVTGMV. Over 1180-1187 the chain is Lumenal; it reads TLQSMLRY. A helical transmembrane segment spans residues 1188 to 1208; that stretch reads VIAVGVTFHLELGPEIVALML. Residues 1209-1236 lie on the Cytoplasmic side of the membrane; sequence LQAVFELRVGLLGAFVLRRSLTTREVVT. Residues 1237–1257 traverse the membrane as a helical segment; sequence IYFLLLVLELGLPSANLEALW. Topologically, residues 1258-1293 are lumenal; it reads GWADALAMGAMIFRACTAEGKTGLGLLLVALMTQQN. The helical transmembrane segment at 1294 to 1314 threads the bilayer; it reads AVIVHQGLVIFLSVASACSVW. The Cytoplasmic segment spans residues 1315-1363; it reads KLLRGQREQKGLSWIVPLAGRLGGKGSGIRLLAFWELASRRDRRSFSEP. A helical transmembrane segment spans residues 1364–1381; the sequence is LTVVGVMLTLASGMMRHT. A topological domain (lumenal) is located at residue S1382. A helical transmembrane segment spans residues 1383 to 1403; that stretch reads QEALCALAAASFLLLMLVLGT. At 1404–1454 the chain is on the cytoplasmic side; it reads RKMQLVAEWSGCVEWHPDLADEGGEISLRVRQDALGNFHLTELEKEERMMA. Residues 1410-1449 are interacts with and activates NS3 protease; that stretch reads AEWSGCVEWHPDLADEGGEISLRVRQDALGNFHLTELEKE. Residues 1455 to 1475 constitute an intramembrane region (helical); sequence FWLLAGLTASALHWTGILVVM. Topologically, residues 1476 to 2160 are cytoplasmic; sequence GLWTMSEMLR…KMAERDAPEA (685 aa). The Peptidase S7 domain occupies 1490-1669; the sequence is SDLVFSGQSG…EVEKSRPNLP (180 aa). Catalysis depends on charge relay system; for serine protease NS3 activity residues H1543, D1567, and S1627. Positions 1675 to 1831 constitute a Helicase ATP-binding domain; the sequence is TGWTSKGTIT…ESNGAITSEE (157 aa). 1688–1695 is an ATP binding site; it reads MHPGSGKT. The DEAH box motif lies at 1779 to 1782; sequence DEAH. The Helicase C-terminal domain maps to 1841 to 2000; it reads DGFDWITEYE…TLRGPVATFY (160 aa). N6-acetyllysine; by host is present on K1883. Residues 2161–2181 form a helical membrane-spanning segment; sequence FLTMVEMVVLGLATLGAVWCL. The Lumenal segment spans residues 2182 to 2189; that stretch reads VLRTSISR. The helical intramembrane region spans 2190–2210; sequence MMLGTMVLLVSLALLWAGGVG. A topological domain (lumenal) is located at residue Y2211. Residues 2212–2232 traverse the membrane as a helical segment; it reads GSMAGVALVFYTLLTVLQPEA. The Cytoplasmic segment spans residues 2233–2244; the sequence is GKQRSSDDNKLA. A helical transmembrane segment spans residues 2245-2265; that stretch reads YFLLTLCSLAGLVAANEMGFL. Over 2266–2299 the chain is Lumenal; that stretch reads EKTKADLSAVLWSEREEPRVWSEWTNIDIQPAKS. The helical intramembrane region spans 2300 to 2320; that stretch reads WGTYVLVVSLFTPYIIHQLQT. The Lumenal portion of the chain corresponds to 2321 to 2343; sequence RIQQLVNSAVASGAQAMRDLGGG. An intramembrane region (helical) is located at residues 2344–2364; the sequence is TPFFGVAGHVLTLGVVSLVGA. Topologically, residues 2365–2368 are lumenal; sequence TPTS. Residues 2369–2389 traverse the membrane as a helical segment; the sequence is LVVGVGLAAFHLAIVVSGLEA. The Cytoplasmic portion of the chain corresponds to 2390–2432; the sequence is ELTQRAHKVFFSAMVRNPMVDGDVINPFGDGEVKPALYERKMS. A helical transmembrane segment spans residues 2433 to 2453; it reads LILAMILCFMSVVLNRTVPAV. The Lumenal segment spans residues 2454–2477; the sequence is TEASAVGLAAAGQLIRPEADTLWT. Residues 2478–2498 form a helical membrane-spanning segment; sequence MPVACGLSGVVRGSLWGFLPL. The Cytoplasmic portion of the chain corresponds to 2499-3414; it reads GHRLWLRTSG…WELKVESSII (916 aa). One can recognise an mRNA cap 0-1 NS5-type MT domain in the interval 2512 to 2776; it reads GGSEGDTLGD…EMDLGVGTRC (265 aa). S2567 lines the S-adenosyl-L-methionine pocket. S2567 is modified (phosphoserine). K2572 acts as the For 2'-O-MTase activity in catalysis. S-adenosyl-L-methionine is bound by residues G2597, W2598, T2615, I2616, and V2643. Residue D2657 is the For 2'-O-MTase activity of the active site. I2658 is an S-adenosyl-L-methionine binding site. Catalysis depends on for 2'-O-MTase activity residues K2694 and E2730. Residues 2730–2734 form an interaction with host SCRIB region; the sequence is EMYYS. An S-adenosyl-L-methionine-binding site is contributed by Y2732. The Zn(2+) site is built by E2950, H2954, C2959, and C2962. Residues 3040–3189 enclose the RdRp catalytic domain; that stretch reads GLFYADDTAG…RPIDDRFSKA (150 aa). Zn(2+) is bound by residues H3224, C3240, and C3359.

The protein in the N-terminal section; belongs to the class I-like SAM-binding methyltransferase superfamily. mRNA cap 0-1 NS5-type methyltransferase family. In terms of assembly, homodimer. Forms heterodimers with envelope protein E in the endoplasmic reticulum and Golgi. As to quaternary structure, homodimer; in the endoplasmic reticulum and Golgi. In terms of assembly, forms homodimers as well as homohexamers. NS1 may interact with NS4A. Forms a heterodimer with serine protease NS3. May form homooligomers. As to quaternary structure, forms a heterodimer with NS2B. Interacts with NS4B. Interacts with unphosphorylated RNA-directed RNA polymerase NS5; this interaction stimulates RNA-directed RNA polymerase NS5 guanylyltransferase activity. In terms of assembly, interacts with serine protease NS3. Interacts with host STAT2; this interaction inhibits the phosphorylation of the latter, and, when all viral proteins are present (polyprotein), targets STAT2 for degradation. Post-translationally, specific enzymatic cleavages in vivo yield mature proteins. Cleavages in the lumen of endoplasmic reticulum are performed by host signal peptidase, whereas cleavages in the cytoplasmic side are performed by serine protease NS3. Signal cleavage at the 2K-4B site requires a prior NS3 protease-mediated cleavage at the 4A-2K site. In terms of processing, cleaved in post-Golgi vesicles by a host furin, releasing the mature small envelope protein M, and peptide pr. This cleavage is incomplete as up to 30% of viral particles still carry uncleaved prM. N-glycosylated. Post-translationally, N-glycosylated. The excreted form is glycosylated and this is required for efficient secretion of the protein from infected cells. In terms of processing, acetylated by host KAT5. Acetylation modulates NS3 RNA-binding and unwinding activities and plays an important positive role for viral replication. Phosphorylated on serines residues. This phosphorylation may trigger NS5 nuclear localization.

Its subcellular location is the virion. The protein resides in the host nucleus. The protein localises to the host cytoplasm. It localises to the host perinuclear region. It is found in the secreted. Its subcellular location is the virion membrane. The protein resides in the host endoplasmic reticulum membrane. The catalysed reaction is Selective hydrolysis of -Xaa-Xaa-|-Yaa- bonds in which each of the Xaa can be either Arg or Lys and Yaa can be either Ser or Ala.. The enzyme catalyses RNA(n) + a ribonucleoside 5'-triphosphate = RNA(n+1) + diphosphate. It catalyses the reaction a ribonucleoside 5'-triphosphate + H2O = a ribonucleoside 5'-diphosphate + phosphate + H(+). It carries out the reaction ATP + H2O = ADP + phosphate + H(+). The catalysed reaction is a 5'-end (5'-triphosphoguanosine)-ribonucleoside in mRNA + S-adenosyl-L-methionine = a 5'-end (N(7)-methyl 5'-triphosphoguanosine)-ribonucleoside in mRNA + S-adenosyl-L-homocysteine. The enzyme catalyses a 5'-end (N(7)-methyl 5'-triphosphoguanosine)-ribonucleoside in mRNA + S-adenosyl-L-methionine = a 5'-end (N(7)-methyl 5'-triphosphoguanosine)-(2'-O-methyl-ribonucleoside) in mRNA + S-adenosyl-L-homocysteine + H(+). Plays a role in virus budding by binding to the cell membrane and gathering the viral RNA into a nucleocapsid that forms the core of a mature virus particle. During virus entry, may induce genome penetration into the host cytoplasm after hemifusion induced by the surface proteins. Can migrate to the cell nucleus where it modulates host functions. Functionally, inhibits RNA silencing by interfering with host Dicer. Its function is as follows. Prevents premature fusion activity of envelope proteins in trans-Golgi by binding to envelope protein E at pH6.0. After virion release in extracellular space, gets dissociated from E dimers. In terms of biological role, acts as a chaperone for envelope protein E during intracellular virion assembly by masking and inactivating envelope protein E fusion peptide. prM is the only viral peptide matured by host furin in the trans-Golgi network probably to avoid catastrophic activation of the viral fusion activity in acidic Golgi compartment prior to virion release. prM-E cleavage is inefficient, and many virions are only partially matured. These uncleaved prM would play a role in immune evasion. May play a role in virus budding. Exerts cytotoxic effects by activating a mitochondrial apoptotic pathway through M ectodomain. May display a viroporin activity. Functionally, binds to host cell surface receptor and mediates fusion between viral and cellular membranes. Envelope protein is synthesized in the endoplasmic reticulum in the form of heterodimer with protein prM. They play a role in virion budding in the ER, and the newly formed immature particle is covered with 60 spikes composed of heterodimer between precursor prM and envelope protein E. The virion is transported to the Golgi apparatus where the low pH causes dissociation of PrM-E heterodimers and formation of E homodimers. prM-E cleavage is inefficient, and many virions are only partially matured. These uncleaved prM would play a role in immune evasion. Its function is as follows. Involved in immune evasion, pathogenesis and viral replication. Once cleaved off the polyprotein, is targeted to three destinations: the viral replication cycle, the plasma membrane and the extracellular compartment. Essential for viral replication. Required for formation of the replication complex and recruitment of other non-structural proteins to the ER-derived membrane structures. Excreted as a hexameric lipoparticle that plays a role against host immune response. Antagonizing the complement function. Binds to the host macrophages and dendritic cells. Inhibits signal transduction originating from Toll-like receptor 3 (TLR3). In terms of biological role, component of the viral RNA replication complex that functions in virion assembly and antagonizes the host immune response. Required cofactor for the serine protease function of NS3. May have membrane-destabilizing activity and form viroporins. Functionally, displays three enzymatic activities: serine protease, NTPase and RNA helicase. NS3 serine protease, in association with NS2B, performs its autocleavage and cleaves the polyprotein at dibasic sites in the cytoplasm: C-prM, NS2A-NS2B, NS2B-NS3, NS3-NS4A, NS4A-2K and NS4B-NS5. NS3 RNA helicase binds RNA and unwinds dsRNA in the 3' to 5' direction. Its function is as follows. Regulates the ATPase activity of the NS3 helicase activity. NS4A allows NS3 helicase to conserve energy during unwinding. In terms of biological role, functions as a signal peptide for NS4B and is required for the interferon antagonism activity of the latter. Induces the formation of ER-derived membrane vesicles where the viral replication takes place. Inhibits interferon (IFN)-induced host STAT1 phosphorylation and nuclear translocation, thereby preventing the establishment of cellular antiviral state by blocking the IFN-alpha/beta pathway. Inhibits STAT2 translocation in the nucleus after IFN-alpha treatment. Functionally, replicates the viral (+) and (-) RNA genome, and performs the capping of genomes in the cytoplasm. NS5 methylates viral RNA cap at guanine N-7 and ribose 2'-O positions. Besides its role in RNA genome replication, also prevents the establishment of cellular antiviral state by blocking the interferon-alpha/beta (IFN-alpha/beta) signaling pathway. Inhibits host TYK2 and STAT2 phosphorylation, thereby preventing activation of JAK-STAT signaling pathway. This chain is Genome polyprotein, found in Homo sapiens (Human).